The sequence spans 154 residues: Isotocin-neurophysin IT 1 (154 aa).

Positions 1–20 are cleaved as a signal peptide; that stretch reads MSGSMFSVFSLLYLLSVCSA. The cysteines at positions 21 and 26 are disulfide-linked. Gly29 carries the glycine amide modification. Cystine bridges form between Cys42–Cys86, Cys45–Cys59, Cys53–Cys76, Cys60–Cys66, Cys93–Cys105, Cys99–Cys117, and Cys106–Cys111.

The protein belongs to the vasopressin/oxytocin family.

Isotocin causes contraction of smooth muscles. This Catostomus commersonii (White sucker) protein is Isotocin-neurophysin IT 1.